We begin with the raw amino-acid sequence, 505 residues long: Peroxisome proliferator-activated receptor gamma (505 aa).

T84 carries an O-linked (GlcNAc) threonine glycan. S112 is modified (phosphoserine; by MAPK). Positions A136–F210 form a DNA-binding region, nuclear receptor. NR C4-type zinc fingers lie at residues C139–C159 and C176–C198. The segment at H205–M280 is interaction with FAM120B. The NR LBD domain maps to D238–D503. A Glycyl lysine isopeptide (Lys-Gly) (interchain with G-Cter in ubiquitin) cross-link involves residue K252. The 9aaTAD signature appears at P495–D503.

Belongs to the nuclear hormone receptor family. NR1 subfamily. Heterodimer with other nuclear receptors, such as RXRA. The heterodimer with the retinoic acid receptor RXRA is called adipocyte-specific transcription factor ARF6. Interacts with NCOA6 coactivator, leading to a strong increase in transcription of target genes. Interacts with coactivator PPARBP, leading to a mild increase in transcription of target genes. Interacts with NOCA7 in a ligand-inducible manner. Interacts with NCOA1 and NCOA2 LXXLL motifs. Interacts with ASXL1, ASXL2, DNTTIP2, FAM120B, MAP2K1/MEK1, NR0B2, PDPK1, PRDM16, PRMT2 and TGFB1I1. Interacts (when activated by agonist) with PPP5C. Interacts with HELZ2 and THRAP3; the interaction stimulates the transcriptional activity of PPARG. Interacts with PER2, the interaction is ligand dependent and blocks PPARG recruitment to target promoters. Interacts with NOCT. Interacts with FOXO1 (acetylated form). Interacts with ACTN4. Interacts (when in the liganded conformation) with GPS2. Interacts with CRY1 and CRY2 in a ligand-dependent manner. In the absence of hormonal ligand, interacts with TACC1. In macrophages, interacts with PAQR3 and STUB1; the interactions promote PPARG poylubiquitination and STUB1-mediated degradation. In terms of processing, O-GlcNAcylation at Thr-84 reduces transcriptional activity in adipocytes. Post-translationally, phosphorylated in basal conditions and dephosphorylated when treated with the ligand. May be dephosphorylated by PPP5C. The phosphorylated Ser-112 form is recognized by PER2 and repressed, dephosphorylation at Ser-112 induces adipogenic activity. Ser-112 phosphorylation levels are reduced by 65% in brown adipose tissue compared to white adipose tissue. Ubiquitinated by E3 ubiquitin-protein ligase complex containing FBXO9; leading to proteasomal degradation. In terms of processing, ubiquitinated by E3 ubiquitin-protein ligase complex containing FBXO9; leading to proteasomal degradation. Ubiquitinated at Lys-252 by TRIM55 leading to proteasomal degradation. Ubiquitinated by E3 ubiquitin-protein ligase STUB1/CHIP; leading to proteasomal degradation. In terms of tissue distribution, highest expression in white and brown adipose tissue. Also found in liver, skeletal muscle, heart, adrenal gland, spleen, kidney and intestine. Isoform 2 is more abundant than isoform 1 in adipose tissue.

It is found in the nucleus. Its subcellular location is the cytoplasm. With respect to regulation, PDPK1 activates its transcriptional activity independently of its kinase activity. In terms of biological role, nuclear receptor that binds peroxisome proliferators such as hypolipidemic drugs and fatty acids. Once activated by a ligand, the nuclear receptor binds to DNA specific PPAR response elements (PPRE) and modulates the transcription of its target genes, such as acyl-CoA oxidase. It therefore controls the peroxisomal beta-oxidation pathway of fatty acids. Key regulator of adipocyte differentiation and glucose homeostasis. ARF6 acts as a key regulator of the tissue-specific adipocyte P2 (aP2) enhancer. Acts as a critical regulator of gut homeostasis by suppressing NF-kappa-B-mediated pro-inflammatory responses. Plays a role in the regulation of cardiovascular circadian rhythms by regulating the transcription of BMAL1 in the blood vessels. The chain is Peroxisome proliferator-activated receptor gamma (Pparg) from Mus musculus (Mouse).